The chain runs to 847 residues: DNA mismatch repair protein MutS (847 aa).

Residue 603-610 coordinates ATP; the sequence is GPNMSGKS.

This sequence belongs to the DNA mismatch repair MutS family.

This protein is involved in the repair of mismatches in DNA. It is possible that it carries out the mismatch recognition step. This protein has a weak ATPase activity. This is DNA mismatch repair protein MutS from Streptococcus suis (strain 98HAH33).